Consider the following 198-residue polypeptide: Recombination protein RecR (198 aa).

The C4-type zinc-finger motif lies at 57–72 (CSVCNNITDLDPCHIC). One can recognise a Toprim domain in the interval 80 to 175 (SIICVVQEPR…RVTRIAHGLP (96 aa)).

Belongs to the RecR family.

Functionally, may play a role in DNA repair. It seems to be involved in an RecBC-independent recombinational process of DNA repair. It may act with RecF and RecO. The chain is Recombination protein RecR from Brevibacillus brevis (strain 47 / JCM 6285 / NBRC 100599).